The following is a 157-amino-acid chain: 2-C-methyl-D-erythritol 2,4-cyclodiphosphate synthase (157 aa).

Positions 9 and 11 each coordinate a divalent metal cation. Residues 9-11 (DVH) and 35-36 (HS) each bind 4-CDP-2-C-methyl-D-erythritol 2-phosphate. Histidine 43 contributes to the a divalent metal cation binding site. 4-CDP-2-C-methyl-D-erythritol 2-phosphate contacts are provided by residues 57-59 (DIG), 62-66 (FPETD), 133-136 (TTME), phenylalanine 140, and lysine 143.

Belongs to the IspF family. Homotrimer. Requires a divalent metal cation as cofactor.

The enzyme catalyses 4-CDP-2-C-methyl-D-erythritol 2-phosphate = 2-C-methyl-D-erythritol 2,4-cyclic diphosphate + CMP. It functions in the pathway isoprenoid biosynthesis; isopentenyl diphosphate biosynthesis via DXP pathway; isopentenyl diphosphate from 1-deoxy-D-xylulose 5-phosphate: step 4/6. Its function is as follows. Involved in the biosynthesis of isopentenyl diphosphate (IPP) and dimethylallyl diphosphate (DMAPP), two major building blocks of isoprenoid compounds. Catalyzes the conversion of 4-diphosphocytidyl-2-C-methyl-D-erythritol 2-phosphate (CDP-ME2P) to 2-C-methyl-D-erythritol 2,4-cyclodiphosphate (ME-CPP) with a corresponding release of cytidine 5-monophosphate (CMP). The sequence is that of 2-C-methyl-D-erythritol 2,4-cyclodiphosphate synthase from Enterococcus faecalis (strain ATCC 700802 / V583).